The chain runs to 276 residues: Secreted RxLR effector protein 120 (276 aa).

The signal sequence occupies residues 1–21 (MRGAYYVITALLVVASSQTSA). The RxLR-dEER motif lies at 48-65 (QSLRGSRDVPDDLAHEER). Residues 97-130 (GKRPRVAEKDALEKASGADEASKKPRNTATDDAF) are disordered. The span at 101-119 (RVAEKDALEKASGADEASK) shows a compositional bias: basic and acidic residues.

The protein belongs to the RxLR effector family.

It is found in the secreted. The protein resides in the host nucleus. Functionally, secreted effector that completely suppresses the host cell death induced by cell death-inducing proteins. This chain is Secreted RxLR effector protein 120, found in Plasmopara viticola (Downy mildew of grapevine).